The sequence spans 233 residues: Phosducin-like protein C2A9.09 (233 aa).

Residues 58–212 (EDEEDDEFLQ…DIAALKDPQN (155 aa)) form the Phosducin domain. The thioredoxin fold stretch occupies residues 86 to 233 (FGSVYPISKP…VNDDLDDDFD (148 aa)). A disordered region spans residues 207-233 (LKDPQNAEDELGKRDSSVNDDLDDDFD). A phosphoserine mark is found at Ser222 and Ser223. A compositionally biased stretch (acidic residues) spans 224-233 (VNDDLDDDFD).

The protein belongs to the phosducin family.

The sequence is that of Phosducin-like protein C2A9.09 from Schizosaccharomyces pombe (strain 972 / ATCC 24843) (Fission yeast).